We begin with the raw amino-acid sequence, 143 residues long: Chorion class A protein Ld5 (143 aa).

A signal peptide spans 1–21 (MNSFALLLVCIQACLVQSVFS).

It belongs to the chorion protein family.

This protein is one of many from the eggshell of the gypsy moth. The chain is Chorion class A protein Ld5 from Lymantria dispar (Gypsy moth).